A 477-amino-acid chain; its full sequence is Ribulose bisphosphate carboxylase large chain (477 aa).

The propeptide occupies 1–2; the sequence is MS. Pro3 bears the N-acetylproline mark. Lys14 is modified (N6,N6,N6-trimethyllysine). Thr173 contributes to the substrate binding site. The active-site Proton acceptor is the Lys175. Lys177 lines the substrate pocket. Mg(2+) is bound by residues Lys201, Asp203, and Glu204. Lys201 carries the N6-carboxylysine modification. The active-site Proton acceptor is His294. The substrate site is built by Arg295, His327, and Ser379.

This sequence belongs to the RuBisCO large chain family. Type I subfamily. Heterohexadecamer of 8 large chains and 8 small chains; disulfide-linked. The disulfide link is formed within the large subunit homodimers. Mg(2+) serves as cofactor. The disulfide bond which can form in the large chain dimeric partners within the hexadecamer appears to be associated with oxidative stress and protein turnover.

The protein localises to the plastid. The protein resides in the chloroplast. It carries out the reaction 2 (2R)-3-phosphoglycerate + 2 H(+) = D-ribulose 1,5-bisphosphate + CO2 + H2O. The enzyme catalyses D-ribulose 1,5-bisphosphate + O2 = 2-phosphoglycolate + (2R)-3-phosphoglycerate + 2 H(+). Functionally, ruBisCO catalyzes two reactions: the carboxylation of D-ribulose 1,5-bisphosphate, the primary event in carbon dioxide fixation, as well as the oxidative fragmentation of the pentose substrate in the photorespiration process. Both reactions occur simultaneously and in competition at the same active site. The chain is Ribulose bisphosphate carboxylase large chain from Gerbera jamesonii (Transvaal daisy).